Consider the following 196-residue polypeptide: Beta-crystallin A4 (196 aa).

Position 2 is an N-acetylthreonine (Thr-2). Residues 2-11 (TLQCTKSAGP) form an N-terminal arm region. 2 Beta/gamma crystallin 'Greek key' domains span residues 12 to 51 (WKMV…KVLS) and 52 to 98 (GAWV…RPAA). The tract at residues 99 to 104 (CANHRD) is connecting peptide. Beta/gamma crystallin 'Greek key' domains are found at residues 105–146 (SRLT…HVHS) and 147–195 (GAWV…RRIQ).

Belongs to the beta/gamma-crystallin family. As to quaternary structure, homo/heterodimer, or complexes of higher-order. The structure of beta-crystallin oligomers seems to be stabilized through interactions between the N-terminal arms.

Crystallins are the dominant structural components of the vertebrate eye lens. In Homo sapiens (Human), this protein is Beta-crystallin A4 (CRYBA4).